The sequence spans 498 residues: MGRKKIQIQRITDERNRQVTFTKRKFGLMKKAYELSVLCDCEIALIIFNHSNKLFQYASTDMDKVLLKYTEYNEPHESRTNADIIETLRKKGFNGCDSPEPDGDDSIDQSPLMEDKYRKSSEDLDILFKRYGSAVPAPNFAMPVTVPVTNQNALHFSNPGGSLITQSLMTSSLTDPRLLSPPQPSLQRNTVSPGLPQRPASAGAMLGGELNNSNGTCPSPVGNGYISARASPGLLPVSNGNSLGKVIQAKSPPSPNQNSQLGANSRKPDLRVITSQGGKGLMHHLTEEQLEMSVQRLGGVSQATHSLTTPVVSVATPSLLSHHGLPFSAMSTAYNTDYQLTSADLASLSTFSSPGSLSLGNVTAWQHQQQQQQQHNQPQQLIPVSLSNLVSSSHLPHTATLTVNTNPINISIKREPASPNRERSTGTPLSCFSHQSRHEATGRSPVDSLSSNASSFEGNDREDPRGDYTSSLGLLRPSGDTESESQSVKRMRLDAWVT.

The segment at Met1–Glu100 is interaction with hdac9. The MADS-box domain maps to Arg3–Tyr57. The segment at residues Ala58–Glu86 is a DNA-binding region (mef2-type). Disordered regions lie at residues Leu173–Gly215, Leu243–Lys267, and Ser411–Thr498. The span at Ile412–Ser424 shows a compositional bias: basic and acidic residues. 2 stretches are compositionally biased toward polar residues: residues Thr425–His434 and Asp447–Glu457.

This sequence belongs to the MEF2 family. In terms of assembly, binds DNA as a multimer, probably as a dimer. Interacts with hdac9. In terms of tissue distribution, restricted to the somitic mesoderm of early embryos and to the body muscle (myotomes) of the tadpole. Expressed in all tissues examined in the adult.

The protein localises to the nucleus. Functionally, may regulate muscle-specific transcription in the embryo and may regulate transcription of a variety of cell types in the adult. It binds to the sequence 5'-CTA[TA]4TAR-3'. The protein is Myocyte-specific enhancer factor 2D homolog (mef2d) of Xenopus laevis (African clawed frog).